The chain runs to 361 residues: Small ribosomal subunit protein mS46 (361 aa).

Residues M1–Y14 constitute a mitochondrion transit peptide. The tract at residues A37–Q99 is disordered. The span at K43 to M52 shows a compositional bias: basic and acidic residues. Low complexity predominate over residues G59–N68. Basic and acidic residues predominate over residues K69–D91.

Belongs to the mitochondrion-specific ribosomal protein mS46 family. In terms of assembly, component of the mitochondrial small ribosomal subunit (mt-SSU). Mature yeast 74S mitochondrial ribosomes consist of a small (37S) and a large (54S) subunit. The 37S small subunit contains a 15S ribosomal RNA (15S mt-rRNA) and 34 different proteins. The 54S large subunit contains a 21S rRNA (21S mt-rRNA) and 46 different proteins.

The protein localises to the mitochondrion. Its function is as follows. Component of the mitochondrial ribosome (mitoribosome), a dedicated translation machinery responsible for the synthesis of mitochondrial genome-encoded proteins, including at least some of the essential transmembrane subunits of the mitochondrial respiratory chain. The mitoribosomes are attached to the mitochondrial inner membrane and translation products are cotranslationally integrated into the membrane. The protein is Small ribosomal subunit protein mS46 (RSM28) of Saccharomyces cerevisiae (strain ATCC 204508 / S288c) (Baker's yeast).